Reading from the N-terminus, the 656-residue chain is ATP-dependent zinc metalloprotease FtsH (656 aa).

Topologically, residues 1–45 are cytoplasmic; sequence MAIFARRIGLNQHSAYGSRQRVIVMKNFGKKALIKQQSPKRVAWT. The helical transmembrane segment at 46-66 threads the bilayer; it reads GALAASLIMLPTMFGGNPVLA. Topologically, residues 67–147 are lumenal; the sequence is QKAERESLSY…EISSANSRAA (81 aa). The helical transmembrane segment at 148–168 threads the bilayer; sequence VGLLINLMWILPLVALMLLFL. Topologically, residues 169–656 are cytoplasmic; sequence RRSTNASSQA…DEQLSMVNSQ (488 aa). 239 to 246 is a binding site for ATP; that stretch reads GPPGTGKT. A Zn(2+)-binding site is contributed by His-460. Residue Glu-461 is part of the active site. His-464 and Asp-538 together coordinate Zn(2+).

This sequence in the central section; belongs to the AAA ATPase family. The protein in the C-terminal section; belongs to the peptidase M41 family. Homohexamer. Zn(2+) is required as a cofactor.

It localises to the cellular thylakoid membrane. Acts as a processive, ATP-dependent zinc metallopeptidase for both cytoplasmic and membrane proteins. Plays a role in the quality control of integral membrane proteins. The protein is ATP-dependent zinc metalloprotease FtsH of Nostoc sp. (strain PCC 7120 / SAG 25.82 / UTEX 2576).